The sequence spans 796 residues: Bud site selection protein 27 (796 aa).

Positions 81-121 (KEEAITFVDDKLKLMEDAIEQFNLKIEEAKKTLDNLNHMED) form a coiled coil. Polar residues predominate over residues 152 to 168 (VISSSVTPTTKQPSQSN). Disordered stretches follow at residues 152–197 (VISS…EENL), 300–344 (LRAQ…QVGF), 421–458 (EGEASRSNRRTRVSRFRKDRASKKENTLSTFKQETTRS), 535–624 (EKEP…AKTG), and 752–796 (ATAS…DSKP). Composition is skewed to basic and acidic residues over residues 169-197 (SKKEQTPAVGPKEKGLAKEKKSKSFEENL) and 306-318 (SQDHEREEGDVNK). Basic residues predominate over residues 427 to 441 (SNRRTRVSRFRKDRA). Residues 535 to 550 (EKEPEINSKSEFETPF) show a composition bias toward basic and acidic residues. The segment covering 551–568 (KKKKLKSLQKPRSSKSMK) has biased composition (basic residues). Residues 579 to 589 (ISDDDYDDDDD) show a composition bias toward acidic residues. Ser580 is modified (phosphoserine). Residues 601–610 (NNTDEQDKFP) are compositionally biased toward basic and acidic residues.

It belongs to the prefoldin subunit alpha family.

It is found in the cytoplasm. Involved in gene expression controlled by TOR kinase and nutrient signaling. May also be involved in positioning the proximal bud pole signal. This is Bud site selection protein 27 (BUD27) from Saccharomyces cerevisiae (strain ATCC 204508 / S288c) (Baker's yeast).